A 332-amino-acid chain; its full sequence is DNA-directed RNA polymerase subunit alpha (332 aa).

The tract at residues Thr-2–Thr-234 is alpha N-terminal domain (alpha-NTD). The alpha C-terminal domain (alpha-CTD) stretch occupies residues Val-248 to Gly-332.

This sequence belongs to the RNA polymerase alpha chain family. In terms of assembly, homodimer. The RNAP catalytic core consists of 2 alpha, 1 beta, 1 beta' and 1 omega subunit. When a sigma factor is associated with the core the holoenzyme is formed, which can initiate transcription.

It catalyses the reaction RNA(n) + a ribonucleoside 5'-triphosphate = RNA(n+1) + diphosphate. Its function is as follows. DNA-dependent RNA polymerase catalyzes the transcription of DNA into RNA using the four ribonucleoside triphosphates as substrates. This Xanthomonas axonopodis pv. citri (strain 306) protein is DNA-directed RNA polymerase subunit alpha.